The sequence spans 508 residues: GMP synthase [glutamine-hydrolyzing] (508 aa).

One can recognise a Glutamine amidotransferase type-1 domain in the interval 1-189 (MIVVLDFGSQ…ALLVCGCEKT (189 aa)). Catalysis depends on cysteine 78, which acts as the Nucleophile. Active-site residues include histidine 163 and glutamate 165. Residues 190–383 (WGMQNFAQKE…LGVSQDFLMR (194 aa)) form the GMPS ATP-PPase domain. Residue 217-223 (SGGVDST) participates in ATP binding.

As to quaternary structure, homodimer.

The enzyme catalyses XMP + L-glutamine + ATP + H2O = GMP + L-glutamate + AMP + diphosphate + 2 H(+). Its pathway is purine metabolism; GMP biosynthesis; GMP from XMP (L-Gln route): step 1/1. Catalyzes the synthesis of GMP from XMP. This Helicobacter acinonychis (strain Sheeba) protein is GMP synthase [glutamine-hydrolyzing].